Reading from the N-terminus, the 429-residue chain is Bifunctional protein GlmU (429 aa).

The pyrophosphorylase stretch occupies residues 1-223 (MKISVLILAA…EQDFMGVNDK (223 aa)). UDP-N-acetyl-alpha-D-glucosamine-binding positions include 8–11 (LAAG), Lys22, Gln74, and 81–82 (GT). Position 102 (Asp102) interacts with Mg(2+). Gly135, Glu149, Asn164, and Asn221 together coordinate UDP-N-acetyl-alpha-D-glucosamine. A Mg(2+)-binding site is contributed by Asn221. The tract at residues 224–244 (IELCLAQDLMQEAIKKEWMKQ) is linker. Residues 245 to 429 (GVIFHMPATT…KDYFYTKFKK (185 aa)) are N-acetyltransferase. UDP-N-acetyl-alpha-D-glucosamine-binding residues include Arg308 and Lys325. His336 functions as the Proton acceptor in the catalytic mechanism. UDP-N-acetyl-alpha-D-glucosamine is bound by residues Tyr339 and Asn350. Acetyl-CoA is bound by residues 359 to 360 (NY), Ser378, Ala396, and Arg413.

It in the N-terminal section; belongs to the N-acetylglucosamine-1-phosphate uridyltransferase family. The protein in the C-terminal section; belongs to the transferase hexapeptide repeat family. Homotrimer. Mg(2+) serves as cofactor.

It localises to the cytoplasm. The catalysed reaction is alpha-D-glucosamine 1-phosphate + acetyl-CoA = N-acetyl-alpha-D-glucosamine 1-phosphate + CoA + H(+). It catalyses the reaction N-acetyl-alpha-D-glucosamine 1-phosphate + UTP + H(+) = UDP-N-acetyl-alpha-D-glucosamine + diphosphate. It functions in the pathway nucleotide-sugar biosynthesis; UDP-N-acetyl-alpha-D-glucosamine biosynthesis; N-acetyl-alpha-D-glucosamine 1-phosphate from alpha-D-glucosamine 6-phosphate (route II): step 2/2. It participates in nucleotide-sugar biosynthesis; UDP-N-acetyl-alpha-D-glucosamine biosynthesis; UDP-N-acetyl-alpha-D-glucosamine from N-acetyl-alpha-D-glucosamine 1-phosphate: step 1/1. The protein operates within bacterial outer membrane biogenesis; LPS lipid A biosynthesis. Catalyzes the last two sequential reactions in the de novo biosynthetic pathway for UDP-N-acetylglucosamine (UDP-GlcNAc). The C-terminal domain catalyzes the transfer of acetyl group from acetyl coenzyme A to glucosamine-1-phosphate (GlcN-1-P) to produce N-acetylglucosamine-1-phosphate (GlcNAc-1-P), which is converted into UDP-GlcNAc by the transfer of uridine 5-monophosphate (from uridine 5-triphosphate), a reaction catalyzed by the N-terminal domain. This Campylobacter lari (strain RM2100 / D67 / ATCC BAA-1060) protein is Bifunctional protein GlmU.